Consider the following 212-residue polypeptide: Redox-sensing transcriptional repressor Rex (212 aa).

The segment at residues 17–56 is a DNA-binding region (H-T-H motif); the sequence is KYHRYLQELMENDIDRISSKELSEKIGFTASQIRQDLNCF. 91–96 contributes to the NAD(+) binding site; sequence GAGNIG.

Belongs to the transcriptional regulatory Rex family. Homodimer.

It localises to the cytoplasm. Functionally, modulates transcription in response to changes in cellular NADH/NAD(+) redox state. In Clostridium perfringens (strain SM101 / Type A), this protein is Redox-sensing transcriptional repressor Rex.